The primary structure comprises 214 residues: Eukaryotic translation initiation factor 4E-1B (214 aa).

MRNA is bound by residues Trp53–Gln54, Trp99–Glu100, Arg154–Lys159, and Thr202–Ser204.

Ovary, muscle and testis.

It is found in the cytoplasm. The protein resides in the nucleus. Its function is as follows. Does not appear to be a mRNA-cap-binding protein. In Danio rerio (Zebrafish), this protein is Eukaryotic translation initiation factor 4E-1B.